We begin with the raw amino-acid sequence, 1481 residues long: Cystic fibrosis transmembrane conductance regulator (1481 aa).

Topologically, residues 1–77 (MQRSPLEKAS…KLINALRRCF (77 aa)) are cytoplasmic. A helical membrane pass occupies residues 78-98 (FWRFMFYGILLYLGEVTKAVQ). Residues 81 to 365 (FMFYGILLYL…WAVQTWYDSL (285 aa)) form the ABC transmembrane type-1 1 domain. Residues 99 to 122 (PLLLGRIIASYDPDNKEERSIAIY) lie on the Extracellular side of the membrane. The chain crosses the membrane as a helical span at residues 123–146 (LGIGLCLLFIVRTLLLHPAIFGLH). The Cytoplasmic portion of the chain corresponds to 147-195 (HIGMQMRIAMFSLIYKKTLKLSSRVLDKISIGQLVSLLSNNLNKFDEGL). Residues 196–216 (ALAHFVWIVPLQVALLMGLIW) traverse the membrane as a helical segment. Topologically, residues 217–222 (ELLQAS) are extracellular. The helical transmembrane segment at 223 to 243 (AFCGLGFLIVLALFQAGLGRM) threads the bilayer. Residues 244-298 (MMKYRDQRAGKINERLVITSEMIENIQSVKAYCWEEAMEKMIENLRQTELKLTRK) lie on the Cytoplasmic side of the membrane. The chain crosses the membrane as a helical span at residues 299 to 319 (AAYVRYFNSSAFFFSGFFVVF). Over 320 to 339 (LSVLPYALIKGIVLRKIFTT) the chain is Extracellular. Residues 340 to 358 (ISFCIVLRMAVTRQFPWAV) traverse the membrane as a helical segment. The Cytoplasmic segment spans residues 359 to 858 (QTWYDSLGAI…YLRYITVHKS (500 aa)). ATP contacts are provided by residues Trp401, Ser434, 458–465 (GSTGAGKT), and Gln493. An ABC transporter 1 domain is found at 423–646 (NDDDSLFFSN…RPDFSSKLMG (224 aa)). Cys524 is lipidated: S-palmitoyl cysteine. Phosphoserine occurs at positions 549 and 660. The interval 654–831 (SAERRNSILT…EEINEEDLKE (178 aa)) is disordered R region. Residue Ser670 is modified to Phosphoserine; by PKA. Ser686 is subject to Phosphoserine. Residue Lys688 forms a Glycyl lysine isopeptide (Lys-Gly) (interchain with G-Cter in ubiquitin) linkage. Phosphoserine is present on residues Ser700 and Ser712. Thr717 carries the phosphothreonine modification. Ser737, Ser753, Ser768, Ser790, Ser795, and Ser813 each carry phosphoserine. The chain crosses the membrane as a helical span at residues 859–879 (LIFVLIWCLVIFLAEVAASLV). In terms of domain architecture, ABC transmembrane type-1 2 spans 859–1155 (LIFVLIWCLV…AVNSSIDVDS (297 aa)). At 880–918 (VLWFLGNTPPQDKGNSTYSRNNSYAVIITRTSSYYVFYI) the chain is on the extracellular side. N-linked (GlcNAc...) asparagine glycosylation is found at Asn894 and Asn900. A discontinuously helical membrane pass occupies residues 919–939 (YVGVADTLLAMGFFRGLPLVH). Topologically, residues 940–990 (TLITVSKILHHKMLHSVLQAPMSTLNTLKAGGILNRFSKDIAILDDLLPLT) are cytoplasmic. A helical transmembrane segment spans residues 991–1011 (IFDFIQLLLIVIGAIAVVAVL). The Extracellular segment spans residues 1012–1013 (QP). A helical transmembrane segment spans residues 1014-1034 (YIFVATVPVIVAFIMLRAYFL). Topologically, residues 1035–1095 (QTSQQLKQLE…TANWFLYLST (61 aa)) are cytoplasmic. The chain crosses the membrane as a helical span at residues 1096–1116 (LRWFQMRIEMIFVIFFIAVTF). Residues 1117 to 1130 (ISILTTGEGEGTVG) lie on the Extracellular side of the membrane. The chain crosses the membrane as a helical span at residues 1131–1151 (IILTLAMNIMSTLQWAVNSSI). Residues 1152 to 1481 (DVDSLMRSVS…TEEEVQDTRL (330 aa)) lie on the Cytoplasmic side of the membrane. An ABC transporter 2 domain is found at 1211–1444 (MTVKDLTAKY…RSLFQQAISP (234 aa)). Residues Tyr1220 and 1245-1252 (GRTGSGKS) each bind ATP. An interaction with GORASP2 region spans residues 1387–1481 (RTLKQAFADC…TEEEVQDTRL (95 aa)). Cys1396 carries S-palmitoyl cysteine lipidation. Phosphoserine occurs at positions 1445 and 1457. Positions 1479–1481 (TRL) match the PDZ-binding motif.

It belongs to the ABC transporter superfamily. ABCC family. CFTR transporter (TC 3.A.1.202) subfamily. As to quaternary structure, monomer; does not require oligomerization for channel activity. May form oligomers in the membrane. Interacts with SLC26A3, SLC26A6 and NHERF1. Interacts with SHANK2. Interacts with MYO6. Interacts (via C-terminus) with GOPC (via PDZ domain); this promotes CFTR internalization and thereby decreases channel activity. Interacts with SLC4A7 through NHERF1. Found in a complex with MYO5B and RAB11A. Interacts with ANO1. Interacts with SLC26A8. Interacts with AHCYL1; the interaction increases CFTR activity. Interacts with CSE1L. The core-glycosylated form interacts with GORASP2 (via PDZ GRASP-type 1 domain) in respone to ER stress. Interacts with MARCHF2; the interaction leads to CFTR ubiqtuitination and degradation. Interacts with ADGRG2. In terms of processing, N-glycosylated. Phosphorylated; cAMP treatment promotes phosphorylation and activates the channel. Dephosphorylation decreases the ATPase activity (in vitro). Phosphorylation at PKA sites activates the channel. Phosphorylation at PKC sites enhances the response to phosphorylation by PKA. Phosphorylated by AMPK; this inhibits channel activity. Post-translationally, ubiquitinated, leading to its degradation in the lysosome. Deubiquitination by USP10 in early endosomes enhances its endocytic recycling to the cell membrane. Ubiquitinated by RNF185 during ER stress. Ubiquitinated by MARCHF2.

It is found in the apical cell membrane. Its subcellular location is the early endosome membrane. The protein localises to the cell membrane. It localises to the recycling endosome membrane. The protein resides in the endoplasmic reticulum membrane. It is found in the nucleus. The enzyme catalyses ATP + H2O + closed Cl(-) channel = ADP + phosphate + open Cl(-) channel.. The catalysed reaction is chloride(in) = chloride(out). It carries out the reaction hydrogencarbonate(in) = hydrogencarbonate(out). It catalyses the reaction ATP + H2O = ADP + phosphate + H(+). In terms of biological role, epithelial ion channel that plays an important role in the regulation of epithelial ion and water transport and fluid homeostasis. Mediates the transport of chloride ions across the cell membrane. Possesses an intrinsic ATPase activity and utilizes ATP to gate its channel; the passive flow of anions through the channel is gated by cycles of ATP binding and hydrolysis by the ATP-binding domains. The ion channel is also permeable to HCO(3)(-); selectivity depends on the extracellular chloride concentration. Exerts its function also by modulating the activity of other ion channels and transporters. Contributes to the regulation of the pH and the ion content of the epithelial fluid layer. Modulates the activity of the epithelial sodium channel (ENaC) complex, in part by regulating the cell surface expression of the ENaC complex. May regulate bicarbonate secretion and salvage in epithelial cells by regulating the transporter SLC4A7. Can inhibit the chloride channel activity of ANO1. Plays a role in the chloride and bicarbonate homeostasis during sperm epididymal maturation and capacitation. The protein is Cystic fibrosis transmembrane conductance regulator of Macaca nemestrina (Pig-tailed macaque).